The chain runs to 519 residues: B3 domain-containing protein Os03g0620400 (519 aa).

A DNA-binding region (TF-B3 1) is located at residues 26 to 119; it reads MKCFHLQMSA…RFEVLILDSD (94 aa). Residues 138–218 are disordered; sequence ERNAAPVDIS…DPQMPPGRNY (81 aa). The span at 189 to 209 shows a compositional bias: acidic residues; it reads SGEEGTDSSTSEDESSYELDD. 2 consecutive DNA-binding regions (TF-B3) follow at residues 249 to 349 and 416 to 516; these read VAIM…LRET and YVSI…IRRN.

The protein resides in the nucleus. The sequence is that of B3 domain-containing protein Os03g0620400 from Oryza sativa subsp. japonica (Rice).